The following is a 176-amino-acid chain: Dynein light chain Tctex-type 5-B (176 aa).

This sequence belongs to the dynein light chain Tctex-type family.

The chain is Dynein light chain Tctex-type 5-B (Dynlt5-b) from Xenopus laevis (African clawed frog).